The primary structure comprises 295 residues: UDP-3-O-acyl-N-acetylglucosamine deacetylase (295 aa).

The Zn(2+) site is built by His77, His233, and Asp237. His260 functions as the Proton donor in the catalytic mechanism.

This sequence belongs to the LpxC family. The cofactor is Zn(2+).

It carries out the reaction a UDP-3-O-[(3R)-3-hydroxyacyl]-N-acetyl-alpha-D-glucosamine + H2O = a UDP-3-O-[(3R)-3-hydroxyacyl]-alpha-D-glucosamine + acetate. The protein operates within glycolipid biosynthesis; lipid IV(A) biosynthesis; lipid IV(A) from (3R)-3-hydroxytetradecanoyl-[acyl-carrier-protein] and UDP-N-acetyl-alpha-D-glucosamine: step 2/6. Catalyzes the hydrolysis of UDP-3-O-myristoyl-N-acetylglucosamine to form UDP-3-O-myristoylglucosamine and acetate, the committed step in lipid A biosynthesis. This Solibacter usitatus (strain Ellin6076) protein is UDP-3-O-acyl-N-acetylglucosamine deacetylase.